A 226-amino-acid polypeptide reads, in one-letter code: Small ribosomal subunit protein uS3 (226 aa).

The region spanning 39-107 (VRKFLNKELR…PAQINISEVR (69 aa)) is the KH type-2 domain.

It belongs to the universal ribosomal protein uS3 family. In terms of assembly, part of the 30S ribosomal subunit. Forms a tight complex with proteins S10 and S14.

Functionally, binds the lower part of the 30S subunit head. Binds mRNA in the 70S ribosome, positioning it for translation. The polypeptide is Small ribosomal subunit protein uS3 (Idiomarina loihiensis (strain ATCC BAA-735 / DSM 15497 / L2-TR)).